The following is a 349-amino-acid chain: tRNA pseudouridine synthase D (349 aa).

A substrate-binding site is contributed by Phe27. The active-site Nucleophile is Asp80. Residue Asn129 participates in substrate binding. Positions 155–303 (GVPNYFGAQR…VEAARRAMLL (149 aa)) constitute a TRUD domain. Phe329 serves as a coordination point for substrate.

Belongs to the pseudouridine synthase TruD family.

It carries out the reaction uridine(13) in tRNA = pseudouridine(13) in tRNA. Its function is as follows. Responsible for synthesis of pseudouridine from uracil-13 in transfer RNAs. The protein is tRNA pseudouridine synthase D of Escherichia coli O127:H6 (strain E2348/69 / EPEC).